The chain runs to 440 residues: V-type ATP synthase beta chain (440 aa).

This sequence belongs to the ATPase alpha/beta chains family.

In terms of biological role, produces ATP from ADP in the presence of a proton gradient across the membrane. The V-type beta chain is a regulatory subunit. The chain is V-type ATP synthase beta chain from Geotalea uraniireducens (strain Rf4) (Geobacter uraniireducens).